A 394-amino-acid polypeptide reads, in one-letter code: MRIFISTGEVSGDLQGSLLVGALRQQAEEQNLELELVGLGGEKMAAAGLTLLANTAAIGSVGLTESLRFIIPTWQIQQRVKRYLKTNPIDLLVLIDYMGPNLTIANYLRKTYPNLPILYYIAPQAWVWSPTKRETAQIMAVTDRLLAIFPGEAEFFQKQGLDVTWVGHPLLDRITKEAPSRGSAREKLGIDHNETVITLLPASRIQELRYLLPSICGAAQQLQSQLPNVKLLLPVSLKDYQPQIEQTLKEFNLTVQLLEGKETLTAIAAADLAITKSGTVNLEIALLNVPQVILYRVSPLTMAIARRIFKFNLPFVSPTNIVLNRGIMPELLQEQATASNIAQAGLELLLNGDRQAKIAQDYQELREALGEPGVCERAAQAVLEFANGQQKSRA.

Belongs to the LpxB family.

It catalyses the reaction a lipid X + a UDP-2-N,3-O-bis[(3R)-3-hydroxyacyl]-alpha-D-glucosamine = a lipid A disaccharide + UDP + H(+). It functions in the pathway bacterial outer membrane biogenesis; LPS lipid A biosynthesis. Functionally, condensation of UDP-2,3-diacylglucosamine and 2,3-diacylglucosamine-1-phosphate to form lipid A disaccharide, a precursor of lipid A, a phosphorylated glycolipid that anchors the lipopolysaccharide to the outer membrane of the cell. The protein is Lipid-A-disaccharide synthase (lpxB) of Synechocystis sp. (strain ATCC 27184 / PCC 6803 / Kazusa).